We begin with the raw amino-acid sequence, 81 residues long: Cytotoxin 2 (81 aa).

A signal peptide spans 1 to 21; it reads MKTLLLTLVVVTIVCLDLGYT. 4 disulfide bridges follow: Cys-24–Cys-42, Cys-35–Cys-59, Cys-63–Cys-74, and Cys-75–Cys-80.

The protein belongs to the three-finger toxin family. Short-chain subfamily. Type IA cytotoxin sub-subfamily. As to quaternary structure, monomer in solution; Homodimer and oligomer in the presence of negatively charged lipids forming a pore with a size ranging between 20 and 30 Angstroms. As to expression, expressed by the venom gland.

It localises to the secreted. It is found in the target cell membrane. In terms of biological role, shows cytolytic activity on many different cells by forming pore in lipid membranes. In vivo, increases heart rate or kills the animal by cardiac arrest. In addition, it binds to heparin with high affinity, interacts with Kv channel-interacting protein 1 (KCNIP1) in a calcium-independent manner, and binds to integrin alpha-V/beta-3 (ITGAV/ITGB3) with moderate affinity. The sequence is that of Cytotoxin 2 from Naja kaouthia (Monocled cobra).